A 526-amino-acid chain; its full sequence is Bifunctional purine biosynthesis protein PurH (526 aa).

The region spanning 1–147 (MSVIKRALIS…KNWKHVAIVT (147 aa)) is the MGS-like domain.

Belongs to the PurH family.

The enzyme catalyses (6R)-10-formyltetrahydrofolate + 5-amino-1-(5-phospho-beta-D-ribosyl)imidazole-4-carboxamide = 5-formamido-1-(5-phospho-D-ribosyl)imidazole-4-carboxamide + (6S)-5,6,7,8-tetrahydrofolate. The catalysed reaction is IMP + H2O = 5-formamido-1-(5-phospho-D-ribosyl)imidazole-4-carboxamide. Its pathway is purine metabolism; IMP biosynthesis via de novo pathway; 5-formamido-1-(5-phospho-D-ribosyl)imidazole-4-carboxamide from 5-amino-1-(5-phospho-D-ribosyl)imidazole-4-carboxamide (10-formyl THF route): step 1/1. The protein operates within purine metabolism; IMP biosynthesis via de novo pathway; IMP from 5-formamido-1-(5-phospho-D-ribosyl)imidazole-4-carboxamide: step 1/1. In Neisseria gonorrhoeae (strain NCCP11945), this protein is Bifunctional purine biosynthesis protein PurH.